A 556-amino-acid polypeptide reads, in one-letter code: CBS domain-containing protein CBSCBSPB3 (556 aa).

2 stretches are compositionally biased toward polar residues: residues M1–V20 and P30–K44. The disordered stretch occupies residues M1 to T63. S2 carries the N-acetylserine modification. CBS domains are found at residues R68–Q127, M134–K189, I235–E294, and M302–S360. The region spanning G414–T502 is the PB1 domain. Residues W527–V549 traverse the membrane as a helical segment.

The protein localises to the membrane. This is CBS domain-containing protein CBSCBSPB3 (CBSCBSPB3) from Arabidopsis thaliana (Mouse-ear cress).